We begin with the raw amino-acid sequence, 195 residues long: Translation machinery-associated protein 22 (195 aa).

The 72-residue stretch at 94 to 165 (VLIKRIERNR…EAKEYIEKLL (72 aa)) folds into the SUI1 domain. Positions 176-195 (EQVDEKKKKKATAPGATPAA) are disordered.

It belongs to the DENR family. As to quaternary structure, interacts with the 40S ribosomal subunit.

It is found in the cytoplasm. This Scheffersomyces stipitis (strain ATCC 58785 / CBS 6054 / NBRC 10063 / NRRL Y-11545) (Yeast) protein is Translation machinery-associated protein 22 (TMA22).